Consider the following 345-residue polypeptide: Dihydroorotate dehydrogenase (quinone) (345 aa).

Residues 65–69 (AGLDK) and Thr-89 each bind FMN. Lys-69 contacts substrate. 114-118 (NRMGF) contributes to the substrate binding site. FMN contacts are provided by Asn-142 and Asn-175. Position 175 (Asn-175) interacts with substrate. The Nucleophile role is filled by Ser-178. Substrate is bound at residue Asn-180. The FMN site is built by Lys-220 and Thr-248. 249–250 (NT) is a substrate binding site. Residues Gly-271, Gly-300, and 321–322 (YT) each bind FMN.

The protein belongs to the dihydroorotate dehydrogenase family. Type 2 subfamily. Monomer. The cofactor is FMN.

The protein localises to the cell membrane. It carries out the reaction (S)-dihydroorotate + a quinone = orotate + a quinol. Its pathway is pyrimidine metabolism; UMP biosynthesis via de novo pathway; orotate from (S)-dihydroorotate (quinone route): step 1/1. Its function is as follows. Catalyzes the conversion of dihydroorotate to orotate with quinone as electron acceptor. The chain is Dihydroorotate dehydrogenase (quinone) from Burkholderia cenocepacia (strain HI2424).